Here is a 206-residue protein sequence, read N- to C-terminus: Somatotropin (206 aa).

A signal peptide spans 1–18; that stretch reads MLDRVVVLLSVLCLGVSS. Gln-19 is subject to Pyrrolidone carboxylic acid. His-37 serves as a coordination point for Zn(2+). The cysteines at positions 70 and 179 are disulfide-linked. Zn(2+) is bound at residue Glu-188. Cys-196 and Cys-204 form a disulfide bridge.

Belongs to the somatotropin/prolactin family.

The protein resides in the secreted. Its function is as follows. Growth hormone plays an important role in growth control and is involved in the regulation of several anabolic processes. Implicated as an osmoregulatory substance important for seawater adaptation. This Pseudocaranx dentex (White trevally) protein is Somatotropin (gh).